The sequence spans 198 residues: Probable nicotinate-nucleotide adenylyltransferase (198 aa).

The protein belongs to the NadD family.

The enzyme catalyses nicotinate beta-D-ribonucleotide + ATP + H(+) = deamido-NAD(+) + diphosphate. It participates in cofactor biosynthesis; NAD(+) biosynthesis; deamido-NAD(+) from nicotinate D-ribonucleotide: step 1/1. In terms of biological role, catalyzes the reversible adenylation of nicotinate mononucleotide (NaMN) to nicotinic acid adenine dinucleotide (NaAD). The chain is Probable nicotinate-nucleotide adenylyltransferase from Herpetosiphon aurantiacus (strain ATCC 23779 / DSM 785 / 114-95).